The primary structure comprises 406 residues: Vacuole membrane protein 1 (406 aa).

Positions 1–22 (MAENGTDCEQRRVGMPKEQNNG) are disordered. Topologically, residues 1-42 (MAENGTDCEQRRVGMPKEQNNGSFQDPSFMCNRKRRDREERQ) are cytoplasmic. Residues 43-63 (SIVLWRKPLITLQYFILEVLI) form a helical membrane-spanning segment. Residues 64-76 (NLKEWSVRLWHRR) are Extracellular-facing. A helical membrane pass occupies residues 77–97 (MMVVSVLLLLAVLSVAYYIEG). Residues 98-110 (EHQQCVQYIEKKC) lie on the Cytoplasmic side of the membrane. The helical transmembrane segment at 111–131 (LWCAYWVGLGILSSVGLGTGL) threads the bilayer. The Extracellular portion of the chain corresponds to 132–250 (HTFLLYLGPH…ATRAKLTVQN (119 aa)). Residues 173–316 (GTEGAISLWT…FVIITFSKHI (144 aa)) form a VTT domain region. A helical membrane pass occupies residues 251–271 (LVQKVGFLGILACASIPNPLF). The Cytoplasmic segment spans residues 272–273 (DL). A helical transmembrane segment spans residues 274–294 (AGITCGHFLVPFWTFFGATLI). At 295–306 (GKAIIKMHIQKL) the chain is on the extracellular side. A helical membrane pass occupies residues 307-327 (FVIITFSKHIVEQMVSLIGVI). Residues 328 to 363 (PSIGPSLQKPFQEYLEAQRKKLHHKGDSGTPQSENW) lie on the Cytoplasmic side of the membrane. A helical membrane pass occupies residues 364–384 (LSWAFEKLVIIMVFYFILSII). The Extracellular portion of the chain corresponds to 385–406 (NSMAQSYAKRVQQKKLSVEKTK).

This sequence belongs to the VMP1 family.

Its subcellular location is the endoplasmic reticulum-Golgi intermediate compartment membrane. It is found in the cell membrane. It localises to the vacuole membrane. The protein resides in the endoplasmic reticulum membrane. It catalyses the reaction a 1,2-diacyl-sn-glycero-3-phospho-L-serine(in) = a 1,2-diacyl-sn-glycero-3-phospho-L-serine(out). The enzyme catalyses cholesterol(in) = cholesterol(out). It carries out the reaction a 1,2-diacyl-sn-glycero-3-phosphocholine(in) = a 1,2-diacyl-sn-glycero-3-phosphocholine(out). The catalysed reaction is a 1,2-diacyl-sn-glycero-3-phosphoethanolamine(in) = a 1,2-diacyl-sn-glycero-3-phosphoethanolamine(out). Its function is as follows. Phospholipid scramblase involved in lipid homeostasis and membrane dynamics processes. Has phospholipid scramblase activity toward cholesterol and phosphatidylserine, as well as phosphatidylethanolamine and phosphatidylcholine. Required for autophagosome formation: participates in early stages of autophagosome biogenesis at the endoplasmic reticulum (ER) membrane by reequilibrating the leaflets of the ER as lipids are extracted by atg2 (atg2a or atg2b) to mediate autophagosome assembly. In addition to autophagy, involved in other processes in which phospholipid scramblase activity is required. Modulates ER contacts with lipid droplets, mitochondria and endosomes. The sequence is that of Vacuole membrane protein 1 from Xenopus laevis (African clawed frog).